A 417-amino-acid polypeptide reads, in one-letter code: Tol-Pal system protein TolB (417 aa).

The signal sequence occupies residues 1–16 (MKYLWLFLIYAIGLFA).

This sequence belongs to the TolB family. In terms of assembly, the Tol-Pal system is composed of five core proteins: the inner membrane proteins TolA, TolQ and TolR, the periplasmic protein TolB and the outer membrane protein Pal. They form a network linking the inner and outer membranes and the peptidoglycan layer.

It localises to the periplasm. Part of the Tol-Pal system, which plays a role in outer membrane invagination during cell division and is important for maintaining outer membrane integrity. The polypeptide is Tol-Pal system protein TolB (Helicobacter pylori (strain J99 / ATCC 700824) (Campylobacter pylori J99)).